Here is a 197-residue protein sequence, read N- to C-terminus: MSDPDVFKILLIGDSAVGKTSLLLRFADNSFQETSVNMTSVDYKNKNIVIDGRTFNLQIWDTAGQERFRTITSSFYRGAHGVLVCYDVTDQLTYNNVRLWMQEIQRYAVLGVSRVLVGNKCDLEDRKLVNTSIAREYADSLGIPFMEASAATGVNVEEAFMAMANEIYRNHMGGSKPSVVNPGSGGTSNTGGKKKFC.

GTP-binding positions include 13–20 (GDSAVGKT), 61–65 (DTAGQ), and 119–122 (NKCD). The segment at 175–197 (SKPSVVNPGSGGTSNTGGKKKFC) is disordered. A lipid anchor (S-geranylgeranyl cysteine) is attached at Cys-197.

Belongs to the small GTPase superfamily. Rab family.

It is found in the cell membrane. In Dictyostelium discoideum (Social amoeba), this protein is Ras-related protein RabG2 (rabG2).